Here is a 119-residue protein sequence, read N- to C-terminus: Gas vesicle protein O1 (119 aa).

Residues 1-12 are compositionally biased toward basic and acidic residues; the sequence is MADPANDRSERE. The tract at residues 1-48 is disordered; that stretch reads MADPANDRSEREEGGEDDETPPASDGNPSPSANSFTLSNAQTRAREAA. The segment covering 26-42 has biased composition (polar residues); it reads GNPSPSANSFTLSNAQT.

This sequence belongs to the gas vesicle GvpO family. In terms of assembly, forms homodimers, forms a GvpN1-GvpO1 heterodimer, interacts with GvpC1 (via the latter's C-terminus), GvpF1, GvpI1 and GvpL1, might interact with GvpA1.

It localises to the gas vesicle. The protein resides in the cytoplasm. In terms of biological role, a minor component of the gas vesicle, also found in soluble extracts. May play a role in transcription and/or RNA stability and in GV assembly. Gas vesicles are hollow, gas filled proteinaceous nanostructures found in several microbial planktonic microorganisms. They allow positioning of halobacteria at the optimal depth for growth in the poorly aerated, shallow brine pools of their habitat. Expression of a 9.5 kb p-vac DNA fragment containing 2 divergently transcribed regions (gvpD-gvpE-gvpF-gvpG-gvpH-gvpI-gvpJ-gvpK-gvpL-gvpM and gvpA-gvpC-gvpN-gvpO) allows H.volcanii to produce gas vesicles. A minimal gas vesicle can be made in H.volcanii by gvpA1-gvpO1 gvpF1-gvpG1-gvpJ1-gvpK1-gvpL1-gvpM1; lack of enough GvpJ1 prevents formation. The same region restores gas vesicle production in H.halobium without the p-vac locus, but it still has the c-vac locus. The chain is Gas vesicle protein O1 from Halobacterium salinarum (strain ATCC 700922 / JCM 11081 / NRC-1) (Halobacterium halobium).